We begin with the raw amino-acid sequence, 130 residues long: Large ribosomal subunit protein bL12 (130 aa).

This sequence belongs to the bacterial ribosomal protein bL12 family. As to quaternary structure, homodimer. Part of the ribosomal stalk of the 50S ribosomal subunit. Forms a multimeric L10(L12)X complex, where L10 forms an elongated spine to which 2 to 4 L12 dimers bind in a sequential fashion. Binds GTP-bound translation factors.

Functionally, forms part of the ribosomal stalk which helps the ribosome interact with GTP-bound translation factors. Is thus essential for accurate translation. The chain is Large ribosomal subunit protein bL12 from Thermobifida fusca (strain YX).